We begin with the raw amino-acid sequence, 599 residues long: Laccase-15 (599 aa).

Residues 1–29 form the signal peptide; it reads MKRCQSSRPTAAVAAVVAAVSMIIVLVSG. Plastocyanin-like domains follow at residues 46–162 and 173–328; these read VVSQ…PRHG and REVP…YSSN. N-linked (GlcNAc...) asparagine glycosylation is found at asparagine 51 and asparagine 92. Histidine 96 and histidine 98 together coordinate Cu cation. Asparagine 124 carries N-linked (GlcNAc...) asparagine glycosylation. Residues histidine 141 and histidine 143 each contribute to the Cu cation site. 6 N-linked (GlcNAc...) asparagine glycosylation sites follow: asparagine 193, asparagine 217, asparagine 331, asparagine 355, asparagine 412, and asparagine 454. The Plastocyanin-like 3 domain maps to 444 to 586; sequence ELAERPPRAY…AAVFIVEDGP (143 aa). 8 residues coordinate Cu cation: asparagine 503, histidine 506, histidine 508, histidine 565, cysteine 566, histidine 567, histidine 571, and methionine 576.

It belongs to the multicopper oxidase family. It depends on Cu cation as a cofactor.

The protein localises to the secreted. Its subcellular location is the extracellular space. It is found in the apoplast. The catalysed reaction is 4 hydroquinone + O2 = 4 benzosemiquinone + 2 H2O. In terms of biological role, lignin degradation and detoxification of lignin-derived products. The chain is Laccase-15 (LAC15) from Oryza sativa subsp. japonica (Rice).